A 317-amino-acid polypeptide reads, in one-letter code: Acetyl-coenzyme A carboxylase carboxyl transferase subunit alpha (317 aa).

Residues Arg31–Ser292 enclose the CoA carboxyltransferase C-terminal domain.

This sequence belongs to the AccA family. In terms of assembly, acetyl-CoA carboxylase is a heterohexamer composed of biotin carboxyl carrier protein (AccB), biotin carboxylase (AccC) and two subunits each of ACCase subunit alpha (AccA) and ACCase subunit beta (AccD).

It is found in the cytoplasm. It catalyses the reaction N(6)-carboxybiotinyl-L-lysyl-[protein] + acetyl-CoA = N(6)-biotinyl-L-lysyl-[protein] + malonyl-CoA. It participates in lipid metabolism; malonyl-CoA biosynthesis; malonyl-CoA from acetyl-CoA: step 1/1. Component of the acetyl coenzyme A carboxylase (ACC) complex. First, biotin carboxylase catalyzes the carboxylation of biotin on its carrier protein (BCCP) and then the CO(2) group is transferred by the carboxyltransferase to acetyl-CoA to form malonyl-CoA. The chain is Acetyl-coenzyme A carboxylase carboxyl transferase subunit alpha from Sorangium cellulosum (strain So ce56) (Polyangium cellulosum (strain So ce56)).